The primary structure comprises 216 residues: Cobalt-zinc-cadmium resistance protein CzcN (216 aa).

The next 3 membrane-spanning stretches (helical) occupy residues 27–47, 50–70, and 116–136; these read IGVWRVVVTFVLASLLFGHSR, GTWVSPLLLTLGMLGVSLATV, and ESLAVTAVLALAFALMYPAVI.

This sequence to A.xylosoxydans NccN.

Its subcellular location is the cell inner membrane. Functionally, component of the CZC cation-efflux system that confers resistance to cobalt, zinc and cadmium. The polypeptide is Cobalt-zinc-cadmium resistance protein CzcN (czcN) (Cupriavidus metallidurans (strain ATCC 43123 / DSM 2839 / NBRC 102507 / CH34) (Ralstonia metallidurans)).